The following is a 750-amino-acid chain: Photosystem I P700 chlorophyll a apoprotein A1 (750 aa).

Helical transmembrane passes span valine 70 to alanine 93, leucine 156 to histidine 179, leucine 195 to leucine 219, isoleucine 291 to tyrosine 309, tryptophan 346 to tyrosine 369, leucine 385 to valine 411, alanine 433 to histidine 455, and phenylalanine 531 to leucine 549. [4Fe-4S] cluster contacts are provided by cysteine 573 and cysteine 582. A run of 2 helical transmembrane segments spans residues histidine 589–tryptophan 610 and leucine 664–phenylalanine 686. Histidine 675 lines the chlorophyll a' pocket. 2 residues coordinate chlorophyll a: methionine 683 and tyrosine 691. Tryptophan 692 is a binding site for phylloquinone. A helical transmembrane segment spans residues alanine 724–alanine 744.

This sequence belongs to the PsaA/PsaB family. The PsaA/B heterodimer binds the P700 chlorophyll special pair and subsequent electron acceptors. PSI consists of a core antenna complex that captures photons, and an electron transfer chain that converts photonic excitation into a charge separation. The eukaryotic PSI reaction center is composed of at least 11 subunits. The cofactor is P700 is a chlorophyll a/chlorophyll a' dimer, A0 is one or more chlorophyll a, A1 is one or both phylloquinones and FX is a shared 4Fe-4S iron-sulfur center..

The protein localises to the plastid. The protein resides in the chloroplast thylakoid membrane. It carries out the reaction reduced [plastocyanin] + hnu + oxidized [2Fe-2S]-[ferredoxin] = oxidized [plastocyanin] + reduced [2Fe-2S]-[ferredoxin]. Its function is as follows. PsaA and PsaB bind P700, the primary electron donor of photosystem I (PSI), as well as the electron acceptors A0, A1 and FX. PSI is a plastocyanin-ferredoxin oxidoreductase, converting photonic excitation into a charge separation, which transfers an electron from the donor P700 chlorophyll pair to the spectroscopically characterized acceptors A0, A1, FX, FA and FB in turn. Oxidized P700 is reduced on the lumenal side of the thylakoid membrane by plastocyanin. This chain is Photosystem I P700 chlorophyll a apoprotein A1, found in Phalaenopsis aphrodite subsp. formosana (Moth orchid).